The primary structure comprises 457 residues: MDHLPIFCQLRDRDCLIVGGGDVAERKARLLLDAGARLTVNALAFIPQFTAWADAGMLTLVEGPFDESLLDTCWLAIAATDDDALNQRVSEAAEARRIFCNVVDAPKAASFIMPSIIDRSPLMVAVSSGGTSPVLARLLREKLESLLPLHLGQVAKYAGQLRGRVKQQFATMSERRRFWEKLFVNDRLAQSLANNDQKAITETTEQLINEPLDHRGEVVLVGAGPGDAGLLTLKGLQQIQQADVVVYDRLVSDDIMNLVRRDADRVFVGKRAGYHCVPQEEINQILLREAQKGKRVVRLKGGDPFIFGRGGEELETLCNAGIPFSVVPGITAASGCSAYSGIPLTHRDYAQSVRLITGHLKTGGELDWENLAAEKQTLVFYMGLNQAATIQQKLIEHGMPGEMPVAIVENGTAVTQRVIDGTLTQLGELAQQMNSPSLIIIGRVVGLRDKLNWFSNH.

The segment at 1-204 (MDHLPIFCQL…NDQKAITETT (204 aa)) is precorrin-2 dehydrogenase /sirohydrochlorin ferrochelatase. Residues 22 to 23 (DV) and 43 to 44 (LA) each bind NAD(+). S128 carries the phosphoserine modification. Positions 216 to 457 (GEVVLVGAGP…RDKLNWFSNH (242 aa)) are uroporphyrinogen-III C-methyltransferase. P225 provides a ligand contact to S-adenosyl-L-methionine. D248 (proton acceptor) is an active-site residue. K270 serves as the catalytic Proton donor. S-adenosyl-L-methionine-binding positions include 301–303 (GGD), I306, 331–332 (TA), M382, and G411.

This sequence in the N-terminal section; belongs to the precorrin-2 dehydrogenase / sirohydrochlorin ferrochelatase family. In the C-terminal section; belongs to the precorrin methyltransferase family.

The enzyme catalyses uroporphyrinogen III + 2 S-adenosyl-L-methionine = precorrin-2 + 2 S-adenosyl-L-homocysteine + H(+). It carries out the reaction precorrin-2 + NAD(+) = sirohydrochlorin + NADH + 2 H(+). The catalysed reaction is siroheme + 2 H(+) = sirohydrochlorin + Fe(2+). It functions in the pathway cofactor biosynthesis; adenosylcobalamin biosynthesis; precorrin-2 from uroporphyrinogen III: step 1/1. Its pathway is cofactor biosynthesis; adenosylcobalamin biosynthesis; sirohydrochlorin from precorrin-2: step 1/1. It participates in porphyrin-containing compound metabolism; siroheme biosynthesis; precorrin-2 from uroporphyrinogen III: step 1/1. The protein operates within porphyrin-containing compound metabolism; siroheme biosynthesis; siroheme from sirohydrochlorin: step 1/1. It functions in the pathway porphyrin-containing compound metabolism; siroheme biosynthesis; sirohydrochlorin from precorrin-2: step 1/1. Its function is as follows. Multifunctional enzyme that catalyzes the SAM-dependent methylations of uroporphyrinogen III at position C-2 and C-7 to form precorrin-2 via precorrin-1. Then it catalyzes the NAD-dependent ring dehydrogenation of precorrin-2 to yield sirohydrochlorin. Finally, it catalyzes the ferrochelation of sirohydrochlorin to yield siroheme. The polypeptide is Siroheme synthase (Escherichia coli O8 (strain IAI1)).